Consider the following 213-residue polypeptide: ATP phosphoribosyltransferase (213 aa).

The protein belongs to the ATP phosphoribosyltransferase family. Short subfamily. As to quaternary structure, heteromultimer composed of HisG and HisZ subunits.

Its subcellular location is the cytoplasm. It catalyses the reaction 1-(5-phospho-beta-D-ribosyl)-ATP + diphosphate = 5-phospho-alpha-D-ribose 1-diphosphate + ATP. The protein operates within amino-acid biosynthesis; L-histidine biosynthesis; L-histidine from 5-phospho-alpha-D-ribose 1-diphosphate: step 1/9. Catalyzes the condensation of ATP and 5-phosphoribose 1-diphosphate to form N'-(5'-phosphoribosyl)-ATP (PR-ATP). Has a crucial role in the pathway because the rate of histidine biosynthesis seems to be controlled primarily by regulation of HisG enzymatic activity. The polypeptide is ATP phosphoribosyltransferase (Thermoanaerobacter pseudethanolicus (strain ATCC 33223 / 39E) (Clostridium thermohydrosulfuricum)).